Here is a 450-residue protein sequence, read N- to C-terminus: Acyltransferase GLAUCE (450 aa).

Active-site proton acceptor residues include H171 and E394.

Belongs to the plant acyltransferase family. In terms of tissue distribution, restricted to the central cells of embryo sacs.

It localises to the cytoplasm. Its subcellular location is the nucleus. In terms of biological role, required for double fertilization of the egg cell and the central cell by two sperm cells, resulting in the formation of the embryo and the endosperm. Involved in the regulation of embryonic expression of PHE1. Essential in maternal tissues to ensure the paternal embryonic expression of several genes, including RPS5a and FAC1, both of which being essential for early embryo and endosperm development in fertilized seeds. This chain is Acyltransferase GLAUCE, found in Arabidopsis thaliana (Mouse-ear cress).